A 416-amino-acid polypeptide reads, in one-letter code: (S)-ureidoglycine--glyoxylate transaminase (416 aa).

Residue Lys-198 is modified to N6-(pyridoxal phosphate)lysine.

Belongs to the class-V pyridoxal-phosphate-dependent aminotransferase family. As to quaternary structure, homodimer. Pyridoxal 5'-phosphate is required as a cofactor.

The catalysed reaction is (S)-2-ureidoglycine + glyoxylate = N-carbamoyl-2-oxoglycine + glycine. Its pathway is nitrogen metabolism; (S)-allantoin degradation. Catalyzes the transamination between an unstable intermediate ((S)-ureidoglycine) and the end product of purine catabolism (glyoxylate) to yield oxalurate and glycine. Glyoxylate is the preferred substrate, but other amino-group acceptors can be used. In Bacillus subtilis (strain 168), this protein is (S)-ureidoglycine--glyoxylate transaminase.